The sequence spans 708 residues: Assimilatory nitrate reductase (708 aa).

Residues 15–73 form the 4Fe-4S Mo/W bis-MGD-type domain; the sequence is TKQVPTTCMRCAVGCGHVHLGSENAYGLETVRGDPSHPVNNGLACGRGIRESADPAGEW. Residues Cys-22, Cys-25, Cys-29, and Cys-59 each coordinate [4Fe-4S] cluster. Residues 586–613 form a disordered region; the sequence is TTGREADGYNTGVRSRSDTPEEPVARVN.

This sequence belongs to the prokaryotic molybdopterin-containing oxidoreductase family. NasA/NapA/NarB subfamily. As to quaternary structure, is probably a monomer. Initially characterized as a dimer of proteins with a MW of 105 and 50 kDa. It depends on [4Fe-4S] cluster as a cofactor. The cofactor is Mo-bis(molybdopterin guanine dinucleotide).

It is found in the cytoplasm. It carries out the reaction nitrite + 2 oxidized [2Fe-2S]-[ferredoxin] + H2O = nitrate + 2 reduced [2Fe-2S]-[ferredoxin] + 2 H(+). It functions in the pathway nitrogen metabolism; nitrate reduction (assimilation). Inhibited by cyanide and azide. Its function is as follows. Nitrate reductase is a key enzyme involved in the first step of nitrate assimilation. Catalyzes the reduction of nitrate to nitrite, using ferredoxin as the electron donor. Can use reduced methyl viologen but neither NADPH nor NADH as electron donors. The sequence is that of Assimilatory nitrate reductase from Haloferax mediterranei (strain ATCC 33500 / DSM 1411 / JCM 8866 / NBRC 14739 / NCIMB 2177 / R-4) (Halobacterium mediterranei).